Reading from the N-terminus, the 90-residue chain is Protein LIM3 (90 aa).

A signal peptide spans 1-26; that stretch reads MAAVKFLVCSVLLVVLATQSEIGLAQ. Cystine bridges form between Cys-28/Cys-65, Cys-38/Cys-54, Cys-55/Cys-80, and Cys-67/Cys-87.

Belongs to the A9/FIL1 family.

The protein resides in the secreted. The protein is Protein LIM3 (LIM3) of Lilium longiflorum (Trumpet lily).